The sequence spans 349 residues: MAEFIRTQIFGTCFEITTRYSDLQPIGMGAFGLVCSAKDQLTGMNVAVKKIMKPFSTPVLAKRTYRELKLLKHLRHENIISLSDIFISPFEDIYFVTELLGTDLHRLLTSRPLETQFIQYFLYQILRGLKFVHSAGVIHRDLKPSNILINENCDLKICDFGLARIQDPQMTGYVSTRYYRAPEIMLTWQKYNVEVDIWSAGCIFAEMIEGKPLFPGRDHVNQFSIITELLGTPPMEVIETICSKNTLRFVQSLPQKEKVPFAEKFKNADPDAIDLLEKMLVFDPRKRISAADALAHNYLAPYHDPTDEPVADEVFDWSFQDNDLPVETWKVMMYSEVLSFHNMDNELQS.

Residues 20–299 enclose the Protein kinase domain; that stretch reads YSDLQPIGMG…AADALAHNYL (280 aa). ATP is bound by residues 26–34 and Lys49; that span reads IGMGAFGLV. Catalysis depends on Asp141, which acts as the Proton acceptor. A Phosphothreonine modification is found at Thr171. The short motif at 171 to 173 is the TXY element; the sequence is TGY. A Phosphotyrosine modification is found at Tyr173. Ser175 carries the phosphoserine modification. The residue at position 176 (Thr176) is a Phosphothreonine. The short motif at 176-178 is the TXY element; that stretch reads TRY.

This sequence belongs to the protein kinase superfamily. Ser/Thr protein kinase family. MAP kinase subfamily. HOG1 sub-subfamily. As to quaternary structure, interacts with cdc37, cmk2, hal4, sin1 and srk1. The cofactor is Mg(2+). Dually phosphorylated on Thr-171 and Tyr-173, which activates the enzyme. Phosphorylated by wis1 in response to osmotic stress, nutrient limitation, hydrogen peroxide and arsenite. Dephosphorylated by pyp1 and pyp2.

It is found in the cytoplasm. It localises to the nucleus. It carries out the reaction L-seryl-[protein] + ATP = O-phospho-L-seryl-[protein] + ADP + H(+). The catalysed reaction is L-threonyl-[protein] + ATP = O-phospho-L-threonyl-[protein] + ADP + H(+). Its activity is regulated as follows. Activated by the MAPK kinase wisl, and negatively regulated by pypl and pyp2 tyrosine phosphatases. Functionally, proline-directed serine/threonine-protein kinase involved in a signal transduction pathway that is activated by changes in the osmolarity of the extracellular environment. Controls osmotic regulation of transcription of target genes. Involved in osmoregulation and stress response pathways leading to an efficient start of sexual differentiation. Supports translation initiation and facilitates adaptation to environmental stress in part through reducing eIF2-alpha phosphorylation. Links the cell-cycle G2/M control with changes in the extracellular environment that affect cell physiology. Phosphorylates atf1 and mkp1. In conjunction with hal4, has a role in the cellular resistance to toxic cations such as Na(+), Li(+) and Ca(2+). Involved in resistance to arsenite, methylglyoxal and hydrogen peroxide. Involved in induction of thermotolerance in mRNA export, as well as in vacuolar fission. In Schizosaccharomyces pombe (strain 972 / ATCC 24843) (Fission yeast), this protein is Mitogen-activated protein kinase sty1 (sty1).